The chain runs to 512 residues: Cytochrome P450 4d1 (512 aa).

Positions 316 and 456 each coordinate heme.

It belongs to the cytochrome P450 family. Heme is required as a cofactor.

It is found in the endoplasmic reticulum membrane. The protein resides in the microsome membrane. Its function is as follows. Involved in the metabolism of insect hormones and in the breakdown of synthetic insecticides. The polypeptide is Cytochrome P450 4d1 (Cyp4d1) (Drosophila melanogaster (Fruit fly)).